Reading from the N-terminus, the 1642-residue chain is Mitochondrial 3' processome subunit 2 (1642 aa).

The N-terminal 27 residues, 1–27 (MGLPFLCHTRVCLFSNKIPFVLCGSRF), are a transit peptide targeting the mitochondrion. Disordered stretches follow at residues 43–69 (ETLNFPELSSPSTSKEPSVGSDSPQKK) and 745–772 (KGEKTDVVQHQQPSRLNEGGELPTLSGP). Over residues 49–65 (ELSSPSTSKEPSVGSDS) the composition is skewed to polar residues.

As to quaternary structure, component of the mitochondrial 3' processome (MPsome) complex composed at least of terminal uridylyltransferase KRET1/TUT1, 3'-5' exonuclease DSS1, MPSS1, MPSS2 and MPSS3. Within the complex, interacts with DSS1.

It is found in the mitochondrion. In terms of biological role, as part of the mitochondrial 3' processome (MPsome), involved in the maturation of guided RNA (gRNA) precursors. The chain is Mitochondrial 3' processome subunit 2 from Trypanosoma brucei brucei.